Here is a 379-residue protein sequence, read N- to C-terminus: Anhydro-N-acetylmuramic acid kinase (379 aa).

9–16 (GTSADGVD) provides a ligand contact to ATP.

Belongs to the anhydro-N-acetylmuramic acid kinase family.

It carries out the reaction 1,6-anhydro-N-acetyl-beta-muramate + ATP + H2O = N-acetyl-D-muramate 6-phosphate + ADP + H(+). It functions in the pathway amino-sugar metabolism; 1,6-anhydro-N-acetylmuramate degradation. It participates in cell wall biogenesis; peptidoglycan recycling. Its function is as follows. Catalyzes the specific phosphorylation of 1,6-anhydro-N-acetylmuramic acid (anhMurNAc) with the simultaneous cleavage of the 1,6-anhydro ring, generating MurNAc-6-P. Is required for the utilization of anhMurNAc either imported from the medium or derived from its own cell wall murein, and thus plays a role in cell wall recycling. This Prochlorococcus marinus (strain MIT 9211) protein is Anhydro-N-acetylmuramic acid kinase.